An 87-amino-acid polypeptide reads, in one-letter code: Small ribosomal subunit protein bS20 (87 aa).

The segment at 1 to 25 (MANIKSAKKRAVQSEKHRLHNASRR) is disordered.

Belongs to the bacterial ribosomal protein bS20 family.

Its function is as follows. Binds directly to 16S ribosomal RNA. In Baumannia cicadellinicola subsp. Homalodisca coagulata, this protein is Small ribosomal subunit protein bS20.